We begin with the raw amino-acid sequence, 893 residues long: Protein bride of sevenless (893 aa).

Residues 1-30 (MSGLQLIWKSPTQLVLFVLLITISCIDLCH) form the signal peptide. The Extracellular segment spans residues 32 to 530 (VGAATPTKKS…RIKLDTWVAT (499 aa)). Disordered stretches follow at residues 36 to 66 (TPTK…NEGS) and 82 to 102 (GTAS…SSTT). A compositionally biased stretch (polar residues) spans 50-66 (QPVSSTTTAIPTTNEGS). Asn183, Asn307, Asn328, Asn471, and Asn482 each carry an N-linked (GlcNAc...) asparagine glycan. 8 helical membrane passes run 531-551 (GLTA…FIVV), 563-583 (PVTS…FVPF), 607-627 (LCGV…SLLL), 630-650 (AVML…NGYI), 653-673 (IICV…LVVM), 692-712 (WGLL…VPFI), 722-742 (GILI…WIAL), and 752-772 (AAIP…ILIP). Residues 773–893 (RTFLIVRGIE…SPDHSKITRF (121 aa)) lie on the Cytoplasmic side of the membrane. The disordered stretch occupies residues 858–893 (ANINPQRPPPHPQQSPSRSSVCSLPPSPDHSKITRF).

It belongs to the G-protein coupled receptor 3 family.

Its subcellular location is the cell membrane. Functionally, acts as a ligand for sevenless tyrosine-kinase receptor during eye development. This is Protein bride of sevenless (boss) from Drosophila virilis (Fruit fly).